We begin with the raw amino-acid sequence, 773 residues long: Tyrosine kinase receptor Cad96Ca (773 aa).

A signal peptide spans 1–48 (MVYHHHNHESRIIHCRKQLTSWRRRSLLLTIIVVTATVVSLISQEAEA). Over 49 to 315 (HNQNAPPILY…ITIFSLKSGT (267 aa)) the chain is Extracellular. Positions 58 to 172 (YVRERNWRIS…ENSSGYRPQT (115 aa)) constitute a Cadherin domain. N-linked (GlcNAc...) asparagine glycosylation is found at N126, N164, and N180. Residues 196–302 (SIRNGLPNSR…TPSGGHHNNS (107 aa)) form a disordered region. The span at 209–235 (WYPPVPQNNIFGPPPFGNNYPPPPPNI) shows a compositional bias: pro residues. Positions 243–253 (SGEEEQPDEEV) are enriched in acidic residues. Polar residues-rich tracts occupy residues 254 to 283 (TPTTPVRISSTTPKSRTKLTPITANNSTRV) and 290 to 302 (ETTTPSGGHHNNS). N-linked (GlcNAc...) asparagine glycans are attached at residues N278, N279, N300, and N301. The helical transmembrane segment at 316–336 (IPIVVTVGGFFVAIAVLLAYL) threads the bilayer. The Cytoplasmic portion of the chain corresponds to 337–773 (CRRRLCAISR…NIVSLSGEKL (437 aa)). Disordered regions lie at residues 352 to 373 (KEKEELAKKSNQSQLSSTLTDD) and 411 to 447 (TGVTNGGVSSPGVPSPGTGEPGSNLGPGCLTGGAGSS). A compositionally biased stretch (polar residues) spans 361-373 (SNQSQLSSTLTDD). Residues 411–433 (TGVTNGGVSSPGVPSPGTGEPGS) show a composition bias toward low complexity. The region spanning 470-749 (LKFFNILGEG…MLDKLLHTEM (280 aa)) is the Protein kinase domain. ATP-binding positions include 476-484 (LGEGAFGQV) and K504. The active-site Proton acceptor is the D610.

Belongs to the protein kinase superfamily. Tyr protein kinase family. Fibroblast growth factor receptor subfamily.

The protein localises to the membrane. The enzyme catalyses L-tyrosyl-[protein] + ATP = O-phospho-L-tyrosyl-[protein] + ADP + H(+). The polypeptide is Tyrosine kinase receptor Cad96Ca (Cad96Ca) (Drosophila melanogaster (Fruit fly)).